We begin with the raw amino-acid sequence, 230 residues long: Sugar fermentation stimulation protein homolog (230 aa).

This sequence belongs to the SfsA family.

This chain is Sugar fermentation stimulation protein homolog, found in Clostridium acetobutylicum (strain ATCC 824 / DSM 792 / JCM 1419 / IAM 19013 / LMG 5710 / NBRC 13948 / NRRL B-527 / VKM B-1787 / 2291 / W).